The following is a 378-amino-acid chain: Queuine tRNA-ribosyltransferase (378 aa).

Asp-91 (proton acceptor) is an active-site residue. Residues 91–95, Asp-145, Gln-189, and Gly-216 each bind substrate; that span reads DSGGF. An RNA binding region spans residues 247-253; the sequence is GVGKPED. Asp-266 functions as the Nucleophile in the catalytic mechanism. The segment at 271–275 is RNA binding; important for wobble base 34 recognition; sequence TRNAR. Zn(2+) contacts are provided by Cys-304, Cys-306, Cys-309, and His-335.

The protein belongs to the queuine tRNA-ribosyltransferase family. In terms of assembly, homodimer. Within each dimer, one monomer is responsible for RNA recognition and catalysis, while the other monomer binds to the replacement base PreQ1. Requires Zn(2+) as cofactor.

It catalyses the reaction 7-aminomethyl-7-carbaguanine + guanosine(34) in tRNA = 7-aminomethyl-7-carbaguanosine(34) in tRNA + guanine. Its pathway is tRNA modification; tRNA-queuosine biosynthesis. Functionally, catalyzes the base-exchange of a guanine (G) residue with the queuine precursor 7-aminomethyl-7-deazaguanine (PreQ1) at position 34 (anticodon wobble position) in tRNAs with GU(N) anticodons (tRNA-Asp, -Asn, -His and -Tyr). Catalysis occurs through a double-displacement mechanism. The nucleophile active site attacks the C1' of nucleotide 34 to detach the guanine base from the RNA, forming a covalent enzyme-RNA intermediate. The proton acceptor active site deprotonates the incoming PreQ1, allowing a nucleophilic attack on the C1' of the ribose to form the product. After dissociation, two additional enzymatic reactions on the tRNA convert PreQ1 to queuine (Q), resulting in the hypermodified nucleoside queuosine (7-(((4,5-cis-dihydroxy-2-cyclopenten-1-yl)amino)methyl)-7-deazaguanosine). The chain is Queuine tRNA-ribosyltransferase from Vibrio vulnificus (strain CMCP6).